A 110-amino-acid chain; its full sequence is MSLEKTTRMNYLFDFYQSLLTSKQKSYMSLYYLDDFSLGEIAEEYEVSRQAVYDNIKRTEAMLEQYEEKLLLLKKFQERKEMFNKLKELASGSKEEEEITALIEALEKLD.

This sequence belongs to the UPF0122 family.

In terms of biological role, might take part in the signal recognition particle (SRP) pathway. This is inferred from the conservation of its genetic proximity to ftsY/ffh. May be a regulatory protein. The protein is UPF0122 protein YlxM (ylxM) of Bacillus subtilis (strain 168).